A 75-amino-acid polypeptide reads, in one-letter code: MLTAGVDHQDLAKRGESLIRQSSNRYLTTVRIAFRAKQRRFDDFDGLLEESSVKPVQRAIVELSDEQDQPDLLPG.

Belongs to the RNA polymerase subunit omega family. In cyanobacteria the RNAP catalytic core is composed of 2 alpha, 1 beta, 1 beta', 1 gamma and 1 omega subunit. When a sigma factor is associated with the core the holoenzyme is formed, which can initiate transcription.

The catalysed reaction is RNA(n) + a ribonucleoside 5'-triphosphate = RNA(n+1) + diphosphate. Its function is as follows. Promotes RNA polymerase assembly. Latches the N- and C-terminal regions of the beta' subunit thereby facilitating its interaction with the beta and alpha subunits. The chain is DNA-directed RNA polymerase subunit omega from Synechococcus sp. (strain WH7803).